The following is a 210-amino-acid chain: Small ribosomal subunit protein uS3 (210 aa).

The KH type-2 domain maps to 17–86; it reads IDEFLEKELR…NPQIEVEEIK (70 aa).

The protein belongs to the universal ribosomal protein uS3 family. As to quaternary structure, part of the 30S ribosomal subunit.

Its function is as follows. Binds the lower part of the 30S subunit head. The chain is Small ribosomal subunit protein uS3 from Pyrococcus furiosus (strain ATCC 43587 / DSM 3638 / JCM 8422 / Vc1).